A 289-amino-acid polypeptide reads, in one-letter code: Pseudouridine-5'-phosphate glycosidase (289 aa).

E10 functions as the Proton donor in the catalytic mechanism. 2 residues coordinate substrate: K71 and V91. D121 serves as a coordination point for Mn(2+). A substrate-binding site is contributed by 123-125; that stretch reads SQD. The active-site Nucleophile is K142.

Belongs to the pseudouridine-5'-phosphate glycosidase family. Homotrimer. Mn(2+) is required as a cofactor.

It carries out the reaction D-ribose 5-phosphate + uracil = psi-UMP + H2O. In terms of biological role, catalyzes the reversible cleavage of pseudouridine 5'-phosphate (PsiMP) to ribose 5-phosphate and uracil. Functions biologically in the cleavage direction, as part of a pseudouridine degradation pathway. The sequence is that of Pseudouridine-5'-phosphate glycosidase from Kosmotoga olearia (strain ATCC BAA-1733 / DSM 21960 / TBF 19.5.1).